The primary structure comprises 225 residues: Protein-L-isoaspartate O-methyltransferase (225 aa).

Serine 75 is an active-site residue.

It belongs to the methyltransferase superfamily. L-isoaspartyl/D-aspartyl protein methyltransferase family.

It is found in the cytoplasm. The enzyme catalyses [protein]-L-isoaspartate + S-adenosyl-L-methionine = [protein]-L-isoaspartate alpha-methyl ester + S-adenosyl-L-homocysteine. Functionally, catalyzes the methyl esterification of L-isoaspartyl residues in peptides and proteins that result from spontaneous decomposition of normal L-aspartyl and L-asparaginyl residues. It plays a role in the repair and/or degradation of damaged proteins. The chain is Protein-L-isoaspartate O-methyltransferase from Xylella fastidiosa (strain M23).